Reading from the N-terminus, the 291-residue chain is Lipoyl synthase (291 aa).

Residues cysteine 33, cysteine 38, cysteine 44, cysteine 59, cysteine 63, cysteine 66, and serine 274 each contribute to the [4Fe-4S] cluster site. The Radical SAM core domain maps to 45 to 263 (WGEGTATFLI…REAAEAMGFK (219 aa)).

The protein belongs to the radical SAM superfamily. Lipoyl synthase family. The cofactor is [4Fe-4S] cluster.

The protein resides in the cytoplasm. The catalysed reaction is [[Fe-S] cluster scaffold protein carrying a second [4Fe-4S](2+) cluster] + N(6)-octanoyl-L-lysyl-[protein] + 2 oxidized [2Fe-2S]-[ferredoxin] + 2 S-adenosyl-L-methionine + 4 H(+) = [[Fe-S] cluster scaffold protein] + N(6)-[(R)-dihydrolipoyl]-L-lysyl-[protein] + 4 Fe(3+) + 2 hydrogen sulfide + 2 5'-deoxyadenosine + 2 L-methionine + 2 reduced [2Fe-2S]-[ferredoxin]. It participates in protein modification; protein lipoylation via endogenous pathway; protein N(6)-(lipoyl)lysine from octanoyl-[acyl-carrier-protein]: step 2/2. In terms of biological role, catalyzes the radical-mediated insertion of two sulfur atoms into the C-6 and C-8 positions of the octanoyl moiety bound to the lipoyl domains of lipoate-dependent enzymes, thereby converting the octanoylated domains into lipoylated derivatives. This Pyrobaculum calidifontis (strain DSM 21063 / JCM 11548 / VA1) protein is Lipoyl synthase.